The sequence spans 99 residues: NADH-quinone oxidoreductase subunit K (99 aa).

The next 3 membrane-spanning stretches (helical) occupy residues 3–23, 28–48, and 59–79; these read ILFSLFISMAMFTFGIIGILI, LIVFMCVELMLNAANLLFVAF, and IWVFFVLVVAAAEAAVGLAII.

This sequence belongs to the complex I subunit 4L family. As to quaternary structure, NDH-1 is composed of 14 different subunits. Subunits NuoA, H, J, K, L, M, N constitute the membrane sector of the complex.

It localises to the cell inner membrane. It catalyses the reaction a quinone + NADH + 5 H(+)(in) = a quinol + NAD(+) + 4 H(+)(out). NDH-1 shuttles electrons from NADH, via FMN and iron-sulfur (Fe-S) centers, to quinones in the respiratory chain. The immediate electron acceptor for the enzyme in this species is believed to be ubiquinone. Couples the redox reaction to proton translocation (for every two electrons transferred, four hydrogen ions are translocated across the cytoplasmic membrane), and thus conserves the redox energy in a proton gradient. This Protochlamydia amoebophila (strain UWE25) protein is NADH-quinone oxidoreductase subunit K.